A 621-amino-acid polypeptide reads, in one-letter code: Glutamyl-tRNA(Gln) amidotransferase subunit E (621 aa).

This sequence belongs to the GatB/GatE family. GatE subfamily. Heterodimer of GatD and GatE.

The catalysed reaction is L-glutamyl-tRNA(Gln) + L-glutamine + ATP + H2O = L-glutaminyl-tRNA(Gln) + L-glutamate + ADP + phosphate + H(+). Its function is as follows. Allows the formation of correctly charged Gln-tRNA(Gln) through the transamidation of misacylated Glu-tRNA(Gln) in organisms which lack glutaminyl-tRNA synthetase. The reaction takes place in the presence of glutamine and ATP through an activated gamma-phospho-Glu-tRNA(Gln). The GatDE system is specific for glutamate and does not act on aspartate. In Methanobrevibacter smithii (strain ATCC 35061 / DSM 861 / OCM 144 / PS), this protein is Glutamyl-tRNA(Gln) amidotransferase subunit E.